We begin with the raw amino-acid sequence, 503 residues long: Surface lipoprotein assembly modifier (503 aa).

An N-terminal signal peptide occupies residues 1-34 (MTITPVYTTFTPTKTPIKFFMAGLTFLIAHISHA). The interval 38 to 220 (RTDNQEPINQ…QYRQALKQRD (183 aa)) is N-terminal domain. The stretch at 136 to 169 (ILLGYANALAALDKGNAKKAIDELRRIIAIMPEY) is one TPR repeat. The interval 221-503 (SWTWQVGMNL…QMFVEFSRIF (283 aa)) is C-terminal probable beta barrel. A run of 14 beta stranded transmembrane segments spans residues 222–232 (WTWQVGMNLAK), 259–270 (LSYQLGADKKWS), 275–285 (AYVGANAQIYG), 299–308 (GRLGANLGFA), 313–322 (DLSIETYGEK), 334–343 (IGIRMSVDYR), 348–358 (FQSLNAIDISR), 372–382 (TLYSTSLIYYP), 387–396 (YYLLGADFYD), 410–419 (RGIRTAWGQE), 424–434 (LSSRAQISINK), 454–463 (MQASLSLWHR), 470–479 (ITPRLTISTN), and 493–503 (NQMFVEFSRIF).

It belongs to the Slam family.

The protein resides in the cell outer membrane. Required for correct export to the cell surface of some cell outer membrane lipoproteins (tested with TpbP) upon heterologous expression in E.coli and probably also in Moraxella. The sequence is that of Surface lipoprotein assembly modifier from Moraxella catarrhalis (Branhamella catarrhalis).